The chain runs to 257 residues: Aspartate/glutamate leucyltransferase (257 aa).

The protein belongs to the R-transferase family. Bpt subfamily.

It is found in the cytoplasm. It catalyses the reaction N-terminal L-glutamyl-[protein] + L-leucyl-tRNA(Leu) = N-terminal L-leucyl-L-glutamyl-[protein] + tRNA(Leu) + H(+). The enzyme catalyses N-terminal L-aspartyl-[protein] + L-leucyl-tRNA(Leu) = N-terminal L-leucyl-L-aspartyl-[protein] + tRNA(Leu) + H(+). In terms of biological role, functions in the N-end rule pathway of protein degradation where it conjugates Leu from its aminoacyl-tRNA to the N-termini of proteins containing an N-terminal aspartate or glutamate. This chain is Aspartate/glutamate leucyltransferase, found in Nitrobacter winogradskyi (strain ATCC 25391 / DSM 10237 / CIP 104748 / NCIMB 11846 / Nb-255).